The following is a 285-amino-acid chain: Pantothenate synthetase (285 aa).

Position 30 to 37 (30 to 37 (MGNLHDGH)) interacts with ATP. Catalysis depends on H37, which acts as the Proton donor. Residue Q61 coordinates (R)-pantoate. Q61 is a binding site for beta-alanine. 149-152 (GEKD) lines the ATP pocket. Q155 is a binding site for (R)-pantoate. Residues I178 and 186–189 (LSSR) contribute to the ATP site.

The protein belongs to the pantothenate synthetase family. Homodimer.

The protein resides in the cytoplasm. The catalysed reaction is (R)-pantoate + beta-alanine + ATP = (R)-pantothenate + AMP + diphosphate + H(+). It participates in cofactor biosynthesis; (R)-pantothenate biosynthesis; (R)-pantothenate from (R)-pantoate and beta-alanine: step 1/1. In terms of biological role, catalyzes the condensation of pantoate with beta-alanine in an ATP-dependent reaction via a pantoyl-adenylate intermediate. In Buchnera aphidicola subsp. Acyrthosiphon pisum (strain 5A), this protein is Pantothenate synthetase.